The following is a 322-amino-acid chain: Ferric-anguibactin-binding protein FatB (322 aa).

A signal peptide spans 1-22 (MFKSTLNIAVAIVCSSLVTLTG). Cysteine 23 carries N-palmitoyl cysteine lipidation. Cysteine 23 carries S-diacylglycerol cysteine lipidation. One can recognise a Fe/B12 periplasmic-binding domain in the interval 57–322 (RVAALDMNEV…IDDIIKGYQS (266 aa)).

Belongs to the bacterial solute-binding protein 8 family. In terms of assembly, part of an iron transport system composed of the outer membrane receptor FatA, the periplasmic binding protein FatB and the inner membrane proteins FatC and FatD.

The protein localises to the cell inner membrane. Functionally, involved in the uptake of iron in complex with the siderophore anguibactin. Binds ferric-anguibactin in the periplasm and mediates its transport into the cytoplasm. The chain is Ferric-anguibactin-binding protein FatB from Vibrio anguillarum (strain ATCC 68554 / 775) (Listonella anguillarum).